The sequence spans 339 residues: Probable long-chain-alcohol O-fatty-acyltransferase 7 (339 aa).

Helical transmembrane passes span 7–27, 39–59, 113–133, 143–163, 226–246, 254–274, and 287–307; these read SLINVGFLTIISVSYCYCLPP, IFPVCVLLVVLPLFFSFSIFT, HLSTYVFPVKIAIFVVLLYVH, FLLCLHPLYVYLLLEILLTLL, MLIGVFATFVTSGVAHEVVFF, TGEVALFFLLHGVCTVAEVAA, and PVVSWMFTIAFVNVTAGWLFF.

This sequence belongs to the wax synthase family.

The protein resides in the membrane. It carries out the reaction a long chain fatty alcohol + a fatty acyl-CoA = a wax ester + CoA. Functionally, catalyzes the final step in the synthesis of long-chain linear esters (waxes). The polypeptide is Probable long-chain-alcohol O-fatty-acyltransferase 7 (AT7) (Arabidopsis thaliana (Mouse-ear cress)).